A 157-amino-acid polypeptide reads, in one-letter code: Peptide methionine sulfoxide reductase MsrA (157 aa).

C13 is a catalytic residue.

This sequence belongs to the MsrA Met sulfoxide reductase family.

The enzyme catalyses L-methionyl-[protein] + [thioredoxin]-disulfide + H2O = L-methionyl-(S)-S-oxide-[protein] + [thioredoxin]-dithiol. It carries out the reaction [thioredoxin]-disulfide + L-methionine + H2O = L-methionine (S)-S-oxide + [thioredoxin]-dithiol. Has an important function as a repair enzyme for proteins that have been inactivated by oxidation. Catalyzes the reversible oxidation-reduction of methionine sulfoxide in proteins to methionine. In Methanococcus maripaludis (strain C5 / ATCC BAA-1333), this protein is Peptide methionine sulfoxide reductase MsrA.